Here is a 360-residue protein sequence, read N- to C-terminus: Ribosomal RNA large subunit methyltransferase M (360 aa).

S-adenosyl-L-methionine is bound by residues serine 187, 220-223 (CPGG), aspartate 239, aspartate 259, and aspartate 276. Lysine 305 serves as the catalytic Proton acceptor.

It belongs to the class I-like SAM-binding methyltransferase superfamily. RNA methyltransferase RlmE family. RlmM subfamily. As to quaternary structure, monomer.

It is found in the cytoplasm. It catalyses the reaction cytidine(2498) in 23S rRNA + S-adenosyl-L-methionine = 2'-O-methylcytidine(2498) in 23S rRNA + S-adenosyl-L-homocysteine + H(+). Its function is as follows. Catalyzes the 2'-O-methylation at nucleotide C2498 in 23S rRNA. In Shewanella sediminis (strain HAW-EB3), this protein is Ribosomal RNA large subunit methyltransferase M.